The following is a 253-amino-acid chain: DnaJ homolog subfamily C member 8 (253 aa).

A2 bears the N-acetylalanine mark. At S35 the chain carries Phosphoserine. Residues 57-124 (NPFEVLQIDP…QKKRALDVIQ (68 aa)) enclose the J domain. Position 146 is an N6-acetyllysine (K146). The segment covering 181 to 222 (EAKEMHERKRQREEEIEAQEKAKREREWQKNFEESRDGRVDS) has biased composition (basic and acidic residues). A disordered region spans residues 181–253 (EAKEMHERKR…PPKVKMEQRE (73 aa)). Short sequence motifs (nuclear localization signal) lie at residues 189–192 (KRQR) and 203–206 (KRER). S222 is subject to Phosphoserine. Basic residues predominate over residues 231 to 240 (KGKKEKKNRT). The interval 232 to 253 (GKKEKKNRTFLRPPKVKMEQRE) is essential for polyglutamine aggregation suppression.

In terms of assembly, interacts with SRPK1. Interacts with HSP70 (HSPA1A or HSPA1B). Ubiquitous.

The protein localises to the nucleus. Suppresses polyglutamine (polyQ) aggregation of ATXN3 in neuronal cells. The sequence is that of DnaJ homolog subfamily C member 8 (DNAJC8) from Homo sapiens (Human).